We begin with the raw amino-acid sequence, 376 residues long: dTDP-4-amino-4,6-dideoxygalactose transaminase (376 aa).

Position 181 is an N6-(pyridoxal phosphate)lysine (K181).

This sequence belongs to the DegT/DnrJ/EryC1 family. As to quaternary structure, homotetramer. It depends on pyridoxal 5'-phosphate as a cofactor.

It catalyses the reaction dTDP-4-amino-4,6-dideoxy-alpha-D-galactose + 2-oxoglutarate = dTDP-4-dehydro-6-deoxy-alpha-D-glucose + L-glutamate. The protein operates within bacterial outer membrane biogenesis; enterobacterial common antigen biosynthesis. In terms of biological role, catalyzes the synthesis of dTDP-4-amino-4,6-dideoxy-D-galactose (dTDP-Fuc4N) from dTDP-4-keto-6-deoxy-D-glucose (dTDP-D-Glc4O) and L-glutamate. The polypeptide is dTDP-4-amino-4,6-dideoxygalactose transaminase (Escherichia coli (strain K12)).